We begin with the raw amino-acid sequence, 817 residues long: Coiled-coil domain-containing protein 175 (817 aa).

Coiled-coil stretches lie at residues 130-166 and 217-594; these read ILEI…ALGI and LQDA…KQEE. The interval 761 to 817 is disordered; it reads EEESPSSLSKEDLQKAGMKQKEEKTLRFSPSLHTRRDTLSRNCKMIKKRSRSPKNKP. Residues 769 to 786 are compositionally biased toward basic and acidic residues; the sequence is SKEDLQKAGMKQKEEKTL. Over residues 804 to 817 the composition is skewed to basic residues; sequence KMIKKRSRSPKNKP.

The chain is Coiled-coil domain-containing protein 175 (Ccdc175) from Rattus norvegicus (Rat).